A 319-amino-acid chain; its full sequence is Olfactory receptor 8K1 (319 aa).

The Extracellular segment spans residues 1–31 (MNHVVKHNHTAVTKVTEFILMGITDNPGLQA). Asparagine 8 is a glycosylation site (N-linked (GlcNAc...) asparagine). A helical transmembrane segment spans residues 32–52 (PLFGLFLIIYLVTVIGNLGMV). At 53-60 (ILTYLDSK) the chain is on the cytoplasmic side. A helical transmembrane segment spans residues 61-81 (LHTPMYFFLRHLSITDLGYST). Residues 82-105 (VIAPKMLVNFIVHKNTISYNWYAT) are Extracellular-facing. A helical membrane pass occupies residues 106–126 (QLAFFEIFIISELFILSAMAY). The Cytoplasmic segment spans residues 127–145 (DRYVAICKPLLYVIIMAEK). The chain crosses the membrane as a helical span at residues 146-166 (VLWVLVIVPYLYSTFVSLFLT). Topologically, residues 167–203 (IKLFKLSFCGSNIISYFYCDCIPLMSILCSDTNELEL) are extracellular. A helical transmembrane segment spans residues 204–223 (IILIFSGCNLLFSLSIVLIS). The Cytoplasmic portion of the chain corresponds to 224–243 (YMFILVAILRMNSRKGRYKA). The chain crosses the membrane as a helical span at residues 244-264 (FSTCSSHLTVVIMFYGTLLFI). The Extracellular segment spans residues 265-277 (YLQPKSSHTLAID). The chain crosses the membrane as a helical span at residues 278-298 (KMASVFYTLLIPMLNPLIYSL). Residues 299 to 319 (RNKEVKDALKRTLTNRFKIPI) lie on the Cytoplasmic side of the membrane.

It belongs to the G-protein coupled receptor 1 family.

The protein localises to the cell membrane. Its function is as follows. Odorant receptor. In Homo sapiens (Human), this protein is Olfactory receptor 8K1 (OR8K1).